The chain runs to 496 residues: Probable cytosol aminopeptidase (496 aa).

Lysine 262 and aspartate 267 together coordinate Mn(2+). Residue lysine 274 is part of the active site. Positions 285, 344, and 346 each coordinate Mn(2+). Arginine 348 is a catalytic residue.

Belongs to the peptidase M17 family. Mn(2+) is required as a cofactor.

It localises to the cytoplasm. The enzyme catalyses Release of an N-terminal amino acid, Xaa-|-Yaa-, in which Xaa is preferably Leu, but may be other amino acids including Pro although not Arg or Lys, and Yaa may be Pro. Amino acid amides and methyl esters are also readily hydrolyzed, but rates on arylamides are exceedingly low.. It catalyses the reaction Release of an N-terminal amino acid, preferentially leucine, but not glutamic or aspartic acids.. Its function is as follows. Presumably involved in the processing and regular turnover of intracellular proteins. Catalyzes the removal of unsubstituted N-terminal amino acids from various peptides. The protein is Probable cytosol aminopeptidase of Rhizobium etli (strain CIAT 652).